A 209-amino-acid chain; its full sequence is Glycine cleavage system H-like protein gcvH4 (209 aa).

Residues 35–51 (NNNNNNNNNNNNNNNNN) are compositionally biased toward low complexity. Positions 35 to 56 (NNNNNNNNNNNNNNNNNRNKKL) are disordered. Residues 73–159 (FATIGITNYV…KTTTTTTKIK (87 aa)) form the Lipoyl-binding domain.

This sequence belongs to the GcvH family.

This Dictyostelium discoideum (Social amoeba) protein is Glycine cleavage system H-like protein gcvH4 (gcvH4).